The sequence spans 1040 residues: Desmoglein-4 (1040 aa).

The signal sequence occupies residues 1–23 (MDWLLFRNICLLILFMVVLGVNS). Positions 24–49 (EFIVEVKELDIENGTTTWQTVRRQKR) are excised as a propeptide. Cadherin domains are found at residues 50 to 157 (EWIK…PPVF), 158 to 269 (TQNV…FPIL), 270 to 385 (EKTS…GPTF), and 389 to 497 (SMTF…CPVI). Topologically, residues 50–633 (EWIKFAAACR…RQSNVGLGPA (584 aa)) are extracellular. An N-linked (GlcNAc...) asparagine glycan is attached at N110. An N-linked (GlcNAc...) asparagine glycan is attached at N545. The helical transmembrane segment at 634-654 (GIGMIILGLLLLFLSPLLLLM) threads the bilayer. The Cytoplasmic segment spans residues 655–1040 (CCCKRRQPEG…RYSNIHYSRQ (386 aa)). Desmoglein repeat repeat units follow at residues 883 to 909 (TLSE…IVTE) and 910 to 940 (TYTA…ETVM). The disordered stretch occupies residues 1015–1040 (QTTRSTSPMTSQHRVTRYSNIHYSRQ).

In terms of assembly, interacts with JUP.

It is found in the cell membrane. The protein resides in the cell junction. It localises to the desmosome. A component of desmosome cell-cell junctions which are required for positive regulation of cellular adhesion. Coordinates the transition from proliferation to differentiation in hair follicle keratinocytes. Plays a role in moderating lymphocyte migration to inflamed skin and maintaining homeostasis of the epidermal inflammatory response. The polypeptide is Desmoglein-4 (Dsg4) (Rattus norvegicus (Rat)).